Consider the following 538-residue polypeptide: Putative cysteine ligase BshC (538 aa).

A coiled-coil region spans residues 460 to 484 (KINEQIELLERMLKRNVEKKHEVEL).

The protein belongs to the BshC family.

Involved in bacillithiol (BSH) biosynthesis. May catalyze the last step of the pathway, the addition of cysteine to glucosamine malate (GlcN-Mal) to generate BSH. The polypeptide is Putative cysteine ligase BshC (Bacillus thuringiensis subsp. konkukian (strain 97-27)).